A 323-amino-acid chain; its full sequence is Glyoxylate/hydroxypyruvate reductase B (323 aa).

Catalysis depends on residues R237 and E266. H285 serves as the catalytic Proton donor.

This sequence belongs to the D-isomer specific 2-hydroxyacid dehydrogenase family. GhrB subfamily. As to quaternary structure, homodimer.

The protein localises to the cytoplasm. The enzyme catalyses glycolate + NADP(+) = glyoxylate + NADPH + H(+). It carries out the reaction (R)-glycerate + NAD(+) = 3-hydroxypyruvate + NADH + H(+). It catalyses the reaction (R)-glycerate + NADP(+) = 3-hydroxypyruvate + NADPH + H(+). Catalyzes the NADPH-dependent reduction of glyoxylate and hydroxypyruvate into glycolate and glycerate, respectively. The sequence is that of Glyoxylate/hydroxypyruvate reductase B from Klebsiella pneumoniae subsp. pneumoniae (strain ATCC 700721 / MGH 78578).